We begin with the raw amino-acid sequence, 361 residues long: Queuine tRNA-ribosyltransferase (361 aa).

Aspartate 92 functions as the Proton acceptor in the catalytic mechanism. Substrate is bound by residues 92–96 (DSGGF), aspartate 146, glutamine 189, and glycine 216. The tract at residues 247-253 (GVGKPAD) is RNA binding. Aspartate 266 functions as the Nucleophile in the catalytic mechanism. An RNA binding; important for wobble base 34 recognition region spans residues 271–275 (TRSGR). 4 residues coordinate Zn(2+): cysteine 304, cysteine 306, cysteine 309, and histidine 335.

Belongs to the queuine tRNA-ribosyltransferase family. As to quaternary structure, homodimer. Within each dimer, one monomer is responsible for RNA recognition and catalysis, while the other monomer binds to the replacement base PreQ1. Zn(2+) serves as cofactor.

It carries out the reaction 7-aminomethyl-7-carbaguanine + guanosine(34) in tRNA = 7-aminomethyl-7-carbaguanosine(34) in tRNA + guanine. It participates in tRNA modification; tRNA-queuosine biosynthesis. In terms of biological role, catalyzes the base-exchange of a guanine (G) residue with the queuine precursor 7-aminomethyl-7-deazaguanine (PreQ1) at position 34 (anticodon wobble position) in tRNAs with GU(N) anticodons (tRNA-Asp, -Asn, -His and -Tyr). Catalysis occurs through a double-displacement mechanism. The nucleophile active site attacks the C1' of nucleotide 34 to detach the guanine base from the RNA, forming a covalent enzyme-RNA intermediate. The proton acceptor active site deprotonates the incoming PreQ1, allowing a nucleophilic attack on the C1' of the ribose to form the product. After dissociation, two additional enzymatic reactions on the tRNA convert PreQ1 to queuine (Q), resulting in the hypermodified nucleoside queuosine (7-(((4,5-cis-dihydroxy-2-cyclopenten-1-yl)amino)methyl)-7-deazaguanosine). This chain is Queuine tRNA-ribosyltransferase, found in Rickettsia bellii (strain OSU 85-389).